The following is a 102-amino-acid chain: Small ribosomal subunit protein eS24 (102 aa).

The tract at residues 70–102 (VYDSPAQAAEVEHDHMLERNKIGADDADAEEAE) is disordered. The segment covering 79 to 93 (EVEHDHMLERNKIGA) has biased composition (basic and acidic residues).

This sequence belongs to the eukaryotic ribosomal protein eS24 family.

The sequence is that of Small ribosomal subunit protein eS24 from Halobacterium salinarum (strain ATCC 29341 / DSM 671 / R1).